Consider the following 231-residue polypeptide: Ribonuclease 3 (231 aa).

Residues 12 to 139 (LKAFLQKNNI…LIAAIYLDQG (128 aa)) form the RNase III domain. Residue Glu52 participates in Mg(2+) binding. The active site involves Asp56. Mg(2+)-binding residues include Asp125 and Glu128. Residue Glu128 is part of the active site. Positions 165-231 (DPKSELQEYF…AANALSKLKT (67 aa)) constitute a DRBM domain.

Belongs to the ribonuclease III family. Homodimer. It depends on Mg(2+) as a cofactor.

The protein localises to the cytoplasm. The enzyme catalyses Endonucleolytic cleavage to 5'-phosphomonoester.. Digests double-stranded RNA. Involved in the processing of primary rRNA transcript to yield the immediate precursors to the large and small rRNAs (23S and 16S). Processes some mRNAs, and tRNAs when they are encoded in the rRNA operon. Processes pre-crRNA and tracrRNA of type II CRISPR loci if present in the organism. This Mycoplasmopsis synoviae (strain 53) (Mycoplasma synoviae) protein is Ribonuclease 3.